Here is a 396-residue protein sequence, read N- to C-terminus: Ribosomal RNA large subunit methyltransferase I (396 aa).

A PUA domain is found at 2-81 (SVRLVLAKGR…ESIDIAFFSR (80 aa)).

This sequence belongs to the methyltransferase superfamily. RlmI family.

It localises to the cytoplasm. The catalysed reaction is cytidine(1962) in 23S rRNA + S-adenosyl-L-methionine = 5-methylcytidine(1962) in 23S rRNA + S-adenosyl-L-homocysteine + H(+). Specifically methylates the cytosine at position 1962 (m5C1962) of 23S rRNA. The polypeptide is Ribosomal RNA large subunit methyltransferase I (Shigella boydii serotype 18 (strain CDC 3083-94 / BS512)).